We begin with the raw amino-acid sequence, 213 residues long: Uracil phosphoribosyltransferase (213 aa).

5-phospho-alpha-D-ribose 1-diphosphate-binding positions include arginine 78, arginine 103, and 131-139 (DPMLATGGT). Uracil contacts are provided by residues isoleucine 197 and 202 to 204 (GDA). Aspartate 203 is a binding site for 5-phospho-alpha-D-ribose 1-diphosphate.

Belongs to the UPRTase family. Mg(2+) is required as a cofactor.

The catalysed reaction is UMP + diphosphate = 5-phospho-alpha-D-ribose 1-diphosphate + uracil. Its pathway is pyrimidine metabolism; UMP biosynthesis via salvage pathway; UMP from uracil: step 1/1. With respect to regulation, allosterically activated by GTP. Functionally, catalyzes the conversion of uracil and 5-phospho-alpha-D-ribose 1-diphosphate (PRPP) to UMP and diphosphate. The chain is Uracil phosphoribosyltransferase from Bifidobacterium animalis subsp. lactis (strain AD011).